The sequence spans 653 residues: Exocyst complex component 7 (653 aa).

The segment at 1 to 384 (MIPPQEASAR…TKNKLPGLIT (384 aa)) is SEC8 and ARHQ binding. 2 coiled-coil regions span residues 5 to 42 (QEASARRREIEDKLKQEEETLSFIRDSLEKSDQLTKNM) and 63 to 85 (VHKQTENLQRLQENVEKTLSCLD). Residue Ser133 is modified to Phosphoserine. Residues 238–272 (FRKSSSSSGVPYSPAIPNKRKDTPTKKPIKRPGRD) form a disordered region.

This sequence belongs to the EXO70 family. In terms of assembly, the exocyst complex is composed of EXOC1, EXOC2, EXOC3, EXOC4, EXOC5, EXOC6, EXOC7 and EXOC8. Interacts with ARHQ in a GTP-dependent manner. Interacts with RAB11FIP3.

The protein resides in the cytoplasm. It is found in the cytosol. The protein localises to the cell membrane. It localises to the midbody. Its subcellular location is the midbody ring. Its function is as follows. Component of the exocyst complex involved in the docking of exocytic vesicles with fusion sites on the plasma membrane. In adipocytes, plays a crucial role in targeting SLC2A4 vesicle to the plasma membrane in response to insulin, perhaps directing the vesicle to the precise site of fusion. It is required for neuron survival and plays an essential role in cortical development. The chain is Exocyst complex component 7 (Exoc7) from Rattus norvegicus (Rat).